The chain runs to 167 residues: Small ribosomal subunit protein uS3m (167 aa).

The N-terminal 35 residues, Met-1–Phe-35, are a transit peptide targeting the mitochondrion.

It belongs to the universal ribosomal protein uS3 family. In terms of assembly, component of the mitochondrial ribosome small subunit (28S) which comprises a 12S rRNA and about 30 distinct proteins.

The protein localises to the mitochondrion. The polypeptide is Small ribosomal subunit protein uS3m (MRPS24) (Bos taurus (Bovine)).